The primary structure comprises 212 residues: Nitrile hydratase subunit beta (212 aa).

This sequence belongs to the nitrile hydratase subunit beta family. As to quaternary structure, heterodimer of an alpha and a beta chain.

It catalyses the reaction an aliphatic primary amide = an aliphatic nitrile + H2O. In terms of biological role, NHase catalyzes the hydration of various nitrile compounds to the corresponding amides. The chain is Nitrile hydratase subunit beta (nthB) from Rhodococcus erythropolis (Arthrobacter picolinophilus).